A 248-amino-acid chain; its full sequence is Putative insertion sequence ATP-binding protein y4uH (248 aa).

106-113 is a binding site for ATP; it reads GPTGIGKS.

Belongs to the IS21/IS1162 putative ATP-binding protein family.

The sequence is that of Putative insertion sequence ATP-binding protein y4uH from Sinorhizobium fredii (strain NBRC 101917 / NGR234).